The primary structure comprises 511 residues: Histidine ammonia-lyase (511 aa).

Residues alanine 142–glycine 144 constitute a cross-link (5-imidazolinone (Ala-Gly)). Residue serine 143 is modified to 2,3-didehydroalanine (Ser).

The protein belongs to the PAL/histidase family. Contains an active site 4-methylidene-imidazol-5-one (MIO), which is formed autocatalytically by cyclization and dehydration of residues Ala-Ser-Gly.

The protein resides in the cytoplasm. The catalysed reaction is L-histidine = trans-urocanate + NH4(+). The protein operates within amino-acid degradation; L-histidine degradation into L-glutamate; N-formimidoyl-L-glutamate from L-histidine: step 1/3. The protein is Histidine ammonia-lyase (hutH) of Rhizobium meliloti (strain 1021) (Ensifer meliloti).